The sequence spans 231 residues: Phosphatidylserine decarboxylase proenzyme (231 aa).

Ser-188 acts as the Schiff-base intermediate with substrate; via pyruvic acid in catalysis. Ser-188 carries the post-translational modification Pyruvic acid (Ser); by autocatalysis.

The protein belongs to the phosphatidylserine decarboxylase family. PSD-A subfamily. Heterodimer of a large membrane-associated beta subunit and a small pyruvoyl-containing alpha subunit. Pyruvate is required as a cofactor. Is synthesized initially as an inactive proenzyme. Formation of the active enzyme involves a self-maturation process in which the active site pyruvoyl group is generated from an internal serine residue via an autocatalytic post-translational modification. Two non-identical subunits are generated from the proenzyme in this reaction, and the pyruvate is formed at the N-terminus of the alpha chain, which is derived from the carboxyl end of the proenzyme. The post-translation cleavage follows an unusual pathway, termed non-hydrolytic serinolysis, in which the side chain hydroxyl group of the serine supplies its oxygen atom to form the C-terminus of the beta chain, while the remainder of the serine residue undergoes an oxidative deamination to produce ammonia and the pyruvoyl prosthetic group on the alpha chain.

The protein localises to the cell membrane. It carries out the reaction a 1,2-diacyl-sn-glycero-3-phospho-L-serine + H(+) = a 1,2-diacyl-sn-glycero-3-phosphoethanolamine + CO2. The protein operates within phospholipid metabolism; phosphatidylethanolamine biosynthesis; phosphatidylethanolamine from CDP-diacylglycerol: step 2/2. Functionally, catalyzes the formation of phosphatidylethanolamine (PtdEtn) from phosphatidylserine (PtdSer). The chain is Phosphatidylserine decarboxylase proenzyme from Rickettsia felis (strain ATCC VR-1525 / URRWXCal2) (Rickettsia azadi).